Here is a 192-residue protein sequence, read N- to C-terminus: Endoribonuclease YbeY (192 aa).

Zn(2+)-binding residues include His-109, His-113, and His-119. The interval 142–192 (VGAALREGGPARAAETETSWTRSPTSTSTRSPSGSTARGTRARSSRAGSGR) is disordered. A compositionally biased stretch (low complexity) spans 159–180 (TSWTRSPTSTSTRSPSGSTARG).

It belongs to the endoribonuclease YbeY family. Requires Zn(2+) as cofactor.

The protein localises to the cytoplasm. Single strand-specific metallo-endoribonuclease involved in late-stage 70S ribosome quality control and in maturation of the 3' terminus of the 16S rRNA. The chain is Endoribonuclease YbeY from Anaeromyxobacter sp. (strain Fw109-5).